The chain runs to 253 residues: Ice-binding protein (253 aa).

A signal peptide spans 1-27 (MKTLISNSKKVLIPLIMGSIFAGNVMA). A disulfide bridge links Cys-75 with Cys-93. 2 consecutive short sequence motifs (ice-binding site motif (T-A/G-X-T/N)) follow at residues 220-223 (TGTT) and 232-235 (TAVT).

This sequence belongs to the ice-binding protein family.

The protein resides in the secreted. Its function is as follows. Binds to the surface of ice crystals and inhibits their growth. Has ice recrystallization inhibition (RI) activity (the ability to prevent the formation of larger grains of ice at the expense of smaller grains), which may protect membranes from freezing injury. Has high thermal hysteresis (TH) activity, which is the ability to lower the freezing point of an aqueous solution below its melting point, and thus the freezing of the cell fluid can be prevented protecting the organism from ice damage. The TH activity of this protein is 3.8 degrees Celsius at 14 mM. In Colwellia sp, this protein is Ice-binding protein.